Consider the following 507-residue polypeptide: Solute carrier family 2, facilitated glucose transporter member 6 (507 aa).

Positions 1–28 (MQEPLLGAEGPDYDTFPEKPPPSPGDRA) are disordered. Residues 1–37 (MQEPLLGAEGPDYDTFPEKPPPSPGDRARVGTLQNKR) lie on the Cytoplasmic side of the membrane. The Dileucine internalization motif signature appears at 5-6 (LL). A Phosphoserine modification is found at Ser-23. A helical transmembrane segment spans residues 38–58 (VFLATFAAVLGNFSFGYALVY). At 59-81 (TSPVIPALERSLDPDLHLTKSQA) the chain is on the extracellular side. Residues 82–102 (SWFGSVFTLGAAAGGLSAMIL) form a helical membrane-spanning segment. Topologically, residues 103-111 (NDLLGRKLS) are cytoplasmic. A helical transmembrane segment spans residues 112–132 (IMFSAVPSAAGYALMAGAHGL). The Extracellular segment spans residues 133–140 (WMLLLGRT). A helical transmembrane segment spans residues 141–161 (LTGFAGGLTAACIPVYVSEIA). Residues 162 to 168 (PPGVRGA) lie on the Cytoplasmic side of the membrane. Residues 169-189 (LGATPQLMAVFGSLSLYALGL) form a helical membrane-spanning segment. Gln-174 is an a D-hexose binding site. Over 190-194 (LLPWR) the chain is Extracellular. A helical transmembrane segment spans residues 195–215 (WLAVAGEAPVLIMILLLSFMP). Topologically, residues 216–289 (NSPRFLLSRG…LLMRLLQQLT (74 aa)) are cytoplasmic. A D-hexose is bound at residue 286–287 (QQ). Residues 290 to 310 (GITPILVYLQSIFDSTAVLLP) traverse the membrane as a helical segment. Residues 311–314 (PKDD) lie on the Extracellular side of the membrane. Residues 315–335 (AAIVGAVRLLSVLIAALTMDL) traverse the membrane as a helical segment. Topologically, residues 336–339 (AGRK) are cytoplasmic. A helical membrane pass occupies residues 340–360 (VLLFVSAAIMFAANLTLGLYI). Residues 361 to 395 (HFGPRPLSPNSTAGLESESWGDLAQPLAAPAGYLT) are Extracellular-facing. A glycan (N-linked (GlcNAc...) asparagine) is linked at Asn-370. Residues 396 to 416 (LVPLLATMLFIMGYAVGWGPI) form a helical membrane-spanning segment. Topologically, residues 417-435 (TWLLMSEVLPLRARGVASG) are cytoplasmic. Position 418 (Trp-418) interacts with a D-hexose. Residues 436-456 (LCVLASWLTAFVLTKSFLPVV) form a helical membrane-spanning segment. The Extracellular portion of the chain corresponds to 457 to 462 (STFGLQ). Residues 463–483 (VPFFFFAAICLVSLVFTGCCV) form a helical membrane-spanning segment. At 484–507 (PETKGRSLEQIESFFRTGRRSFLR) the chain is on the cytoplasmic side.

This sequence belongs to the major facilitator superfamily. Sugar transporter (TC 2.A.1.1) family. Glucose transporter subfamily. Highly expressed in brain, spleen and peripheral blood leukocytes.

The protein localises to the lysosome membrane. In terms of biological role, probable sugar transporter that acts as a regulator of glycolysis in macrophages. Does not transport glucose. The polypeptide is Solute carrier family 2, facilitated glucose transporter member 6 (Homo sapiens (Human)).